The following is a 69-amino-acid chain: Putative membrane protein insertion efficiency factor (69 aa).

The protein belongs to the UPF0161 family.

The protein localises to the cell inner membrane. In terms of biological role, could be involved in insertion of integral membrane proteins into the membrane. This is Putative membrane protein insertion efficiency factor from Dechloromonas aromatica (strain RCB).